The chain runs to 456 residues: Putative F-box/LRR-repeat protein At5g02700 (456 aa).

Residues 26-72 form the F-box domain; sequence ADFINYMPDDILHHILSFIPTDLAMRTSVLSRRWRHVWCETPCLDIT. LRR repeat units follow at residues 126 to 154, 177 to 202, 206 to 224, 271 to 300, and 330 to 355; these read VRDF…DVTL, FCQI…TLDT, LERL…DINQ, LSPL…TVGE, and FVRS…RPST.

This Arabidopsis thaliana (Mouse-ear cress) protein is Putative F-box/LRR-repeat protein At5g02700.